We begin with the raw amino-acid sequence, 132 residues long: Monothiol glutaredoxin-S9 (132 aa).

A disordered region spans residues 16–38 (ASRPATAAAAPPPPPPRGEEEEV). The Glutaredoxin domain occupies 35–131 (EEEVRRAVAE…PILKEAGALW (97 aa)). Residue Cys-55 coordinates [2Fe-2S] cluster. The short motif at 129 to 132 (ALWL) is the Responsive for interaction with TGA factors element.

This sequence belongs to the glutaredoxin family. CC-type subfamily.

The protein localises to the cytoplasm. It localises to the nucleus. In terms of biological role, may only reduce GSH-thiol disulfides, but not protein disulfides. The protein is Monothiol glutaredoxin-S9 (GRXS9) of Oryza sativa subsp. japonica (Rice).